The following is a 398-amino-acid chain: Neuroplastin (398 aa).

An N-terminal signal peptide occupies residues 1–28 (MSGSSLPSALALSLLLVSGSLLPGPGAA). Ig-like domains follow at residues 29–134 (QNAG…PSIT), 148–235 (PRIV…IEVK), and 238–329 (PDIT…SVVT). Over 29–339 (QNAGFVKSPM…VLRVRSHLAP (311 aa)) the chain is Extracellular. Cys-52 and Cys-116 are oxidised to a cystine. The segment at 149–161 (RIVTSEEVIIRDS) is narpin; mediates binding with FGFR1 and has antidepressant-like activity. Cysteines 170 and 218 form a disulfide. Asn-171, Asn-197, Asn-229, Asn-284, Asn-296, and Asn-317 each carry an N-linked (GlcNAc...) asparagine glycan. Cysteines 259 and 316 form a disulfide. The chain crosses the membrane as a helical span at residues 340–360 (LWPFLGILAEIIILVVIIVVY). At 361 to 398 (EKRKRPDEVPDDDEPAGPMKTNSTNNHKDKNLRQRNTN) the chain is on the cytoplasmic side. The segment at 365-398 (RPDEVPDDDEPAGPMKTNSTNNHKDKNLRQRNTN) is disordered.

As to quaternary structure, interacts with ATP2B1; this interaction stabilizes ATP2B1 and increases ATPase activity; this interaction controls T cell calcium homeostasis following T cell activation. Interacts with XKR8; promoting its localization at the cell membrane. Isoform 1 is ubiquitously expressed. Isoform 2 is expressed in brain cortex and cerebellum (at protein level).

It is found in the cell membrane. The protein localises to the postsynaptic density. In terms of biological role, probable homophilic and heterophilic cell adhesion molecule involved in long term potentiation at hippocampal excitatory synapses through activation of p38MAPK. May also regulate neurite outgrowth by activating the FGFR1 signaling pathway. May play a role in synaptic plasticity. Also acts as a chaperone for ATP2B1; stabilizes ATP2B1 and increases its ATPase activity. Promotes localization of XKR8 at the cell membrane. In Homo sapiens (Human), this protein is Neuroplastin (NPTN).